The sequence spans 262 residues: Putative cysteine-rich repeat secretory protein 24 (262 aa).

Residues 1–29 form the signal peptide; that stretch reads MSLSSSVTKHLISASILAIVAMQLPSVHS. Gnk2-homologous domains are found at residues 39–141 and 147–259; these read YLHH…SIYT and YKNN…LYPF.

The protein belongs to the cysteine-rich repeat secretory protein family.

It is found in the secreted. The protein is Putative cysteine-rich repeat secretory protein 24 (CRRSP24) of Arabidopsis thaliana (Mouse-ear cress).